Reading from the N-terminus, the 613-residue chain is Forkhead box protein O (613 aa).

4 disordered regions span residues 39 to 90 (RARS…KNSS), 182 to 205 (KSVRRRAASMETSRYEKRRGRAKK), 217 to 269 (GLND…RLSP), and 317 to 360 (QGFS…PASG). Threonine 44 carries the post-translational modification Phosphothreonine; by PKB/AKT1. A compositionally biased stretch (polar residues) spans 63-80 (TKASNQQLAPGDSQQAIQ). Phosphoserine is present on serine 75. Residues 81–90 (NANAAKKNSS) show a composition bias toward low complexity. A DNA-binding region (fork-head) is located at residues 95-201 (WGNLSYADLI…ETSRYEKRRG (107 aa)). At serine 190 the chain carries Phosphoserine; by PKB/AKT1. Composition is skewed to polar residues over residues 221 to 230 (ATPSPSSSVS) and 256 to 265 (RASSNASSCG). Position 259 is a phosphoserine; by PKB/AKT1 (serine 259). Residues serine 262, serine 263, and serine 268 each carry the phosphoserine modification. The span at 327–336 (SQPPPPPYQP) shows a compositional bias: pro residues. Over residues 337–353 (PQHQQAQQQQQQQSPYA) the composition is skewed to low complexity.

In terms of assembly, interacts with melt.

Its subcellular location is the cytoplasm. The protein localises to the nucleus. Transcription factor involved in the regulation of the insulin signaling pathway. Consistently activates both the downstream target Thor\d4EBP and the feedback control target InR. Involved in negative regulation of the cell cycle, modulating cell growth and proliferation. In response to cellular stresses, such as nutrient deprivation or increased levels of reactive oxygen species, foxo is activated and inhibits growth through the action of target genes such as Thor. Foxo activated in the adult fat body can regulate lifespan in adults; an insulin peptide itself may function as one secondary messenger of insulin-regulated aging. Also regulates Lip4, homolog of human acid lipases, thereby acting as a key modulator of lipid metabolism by insulin signaling and integrates insulin responses to glucose and lipid homeostasis. In Drosophila melanogaster (Fruit fly), this protein is Forkhead box protein O.